The chain runs to 348 residues: MTLQAQLEALRDNTLKEIAQVATLKELNQIRVETLGKKGPITEVLRGMKNLSPEERPVVGGFANEIRDLLTEAIEARKVVLENEALNAALKEESLDVTLPGKQMPQGTRHILTQVMEEIEDIFLGMGYQVVEGYEVESDHYNFERMNLPKDHPARDMQDTFYISDEMLIRTHTSPVQARTMEKHDFSKGALRMISPGKVFRRDTDDATHSHQFHQIEGLVVDKNVTMGDLKGTLEVMMKKMFGEDRKIRLRPSYFPFTEPSVEVDVSCFKCGGAGCNVCKHTGWIEILGAGMVHPDVLQMSGIDPTEYSGFAFGLGPDRVAMLRYGVNDIRNFYQNDLRFLNQFKVKE.

A Mg(2+)-binding site is contributed by glutamate 259.

This sequence belongs to the class-II aminoacyl-tRNA synthetase family. Phe-tRNA synthetase alpha subunit type 1 subfamily. In terms of assembly, tetramer of two alpha and two beta subunits. Requires Mg(2+) as cofactor.

Its subcellular location is the cytoplasm. The enzyme catalyses tRNA(Phe) + L-phenylalanine + ATP = L-phenylalanyl-tRNA(Phe) + AMP + diphosphate + H(+). The polypeptide is Phenylalanine--tRNA ligase alpha subunit (Enterococcus faecalis (strain ATCC 700802 / V583)).